We begin with the raw amino-acid sequence, 836 residues long: Envelope glycoprotein gp160 (836 aa).

Positions 1–21 (MGMQSGWPFFCLLISLTIGSD) are cleaved as a signal peptide. The Extracellular segment spans residues 22 to 656 (PHWVTVYYGV…ITKWLWYIKI (635 aa)). A disulfide bridge links cysteine 43 with cysteine 63. Residues asparagine 77, asparagine 121, asparagine 130, asparagine 134, asparagine 146, asparagine 150, asparagine 180, asparagine 189, asparagine 224, asparagine 228, asparagine 233, asparagine 254, asparagine 276, asparagine 282, asparagine 288, asparagine 318, asparagine 328, asparagine 340, and asparagine 341 are each glycosylated (N-linked (GlcNAc...) asparagine; by host). Disulfide bonds link cysteine 108-cysteine 197, cysteine 115-cysteine 188, cysteine 120-cysteine 147, cysteine 210-cysteine 239, and cysteine 220-cysteine 231. The V1 stretch occupies residues 120–146 (CNNSNGNSAGNSTTNRTEDLEDRQMKN). A V2 region spans residues 147–188 (CSFNITTEIRDRKKQVYSLFYVEDVVPIKDGTDNNTYRLINC). Residues 283–316 (CTRPGNNTGGQVQIGPAMTFYNIEKIVGDVRQAY) are V3. A disulfide bridge links cysteine 283 with cysteine 317. Residues 349–359 (KNGGDLEVTHL) are CD4-binding loop. Intrachain disulfides connect cysteine 363–cysteine 418 and cysteine 370–cysteine 391. The tract at residues 370–391 (CNTSRLFNESENKTNKTIILPC) is V4. Asparagine 371, asparagine 377, asparagine 381, asparagine 384, asparagine 415, and asparagine 435 each carry an N-linked (GlcNAc...) asparagine; by host glycan. A V5 region spans residues 434 to 441 (GNKTVYPS). The fusion peptide stretch occupies residues 482–503 (AAFGLGALFLGFLGAAGSTMGA). The interval 545 to 563 (KQLRAKVLAIERYLRDQQI) is immunosuppression. Cysteine 569 and cysteine 575 form a disulfide bridge. N-linked (GlcNAc...) asparagine; by host glycosylation is found at asparagine 582, asparagine 588, asparagine 597, and asparagine 609. A coiled-coil region spans residues 605–639 (RKVRNYSGVIFDLIEQAQEQQNTNEKALLELDQWA). An MPER; binding to GalCer region spans residues 634–655 (ELDQWASLWNWFDITKWLWYIK). The helical transmembrane segment at 657-677 (AIMVVAGIIGIRIISAIITII) threads the bilayer. Over 678–836 (ARVRQGYSPL…IRQGLERALL (159 aa)) the chain is Cytoplasmic. A YXXL motif; contains endocytosis signal motif is present at residues 684-687 (YSPL). The disordered stretch occupies residues 696 to 715 (AARGPDRPEETEEGVGGQDR). A Di-leucine internalization motif motif is present at residues 835-836 (LL).

It belongs to the HIV-1 env protein family. The mature envelope protein (Env) consists of a homotrimer of non-covalently associated gp120-gp41 heterodimers. The resulting complex protrudes from the virus surface as a spike. There seems to be as few as 10 spikes on the average virion. Interacts with host CD4, CCR5 and CXCR4. Gp120 also interacts with the C-type lectins CD209/DC-SIGN and CLEC4M/DC-SIGNR (collectively referred to as DC-SIGN(R)). Gp120 and gp41 interact with GalCer. Gp120 interacts with host ITGA4/ITGB7 complex; on CD4+ T-cells, this interaction results in rapid activation of integrin ITGAL/LFA-1, which facilitates efficient cell-to-cell spreading of HIV-1. Gp120 interacts with cell-associated heparan sulfate; this interaction increases virus infectivity on permissive cells and may be involved in infection of CD4- cells. In terms of assembly, the mature envelope protein (Env) consists of a homotrimer of non-covalently associated gp120-gp41 heterodimers. The resulting complex protrudes from the virus surface as a spike. There seems to be as few as 10 spikes on the average virion. In terms of processing, highly glycosylated by host. The high number of glycan on the protein is reffered to as 'glycan shield' because it contributes to hide protein sequence from adaptive immune system. Post-translationally, palmitoylation of the transmembrane protein and of Env polyprotein (prior to its proteolytic cleavage) is essential for their association with host cell membrane lipid rafts. Palmitoylation is therefore required for envelope trafficking to classical lipid rafts, but not for viral replication. Specific enzymatic cleavages in vivo yield mature proteins. Envelope glycoproteins are synthesized as an inactive precursor that is heavily N-glycosylated and processed likely by host cell furin in the Golgi to yield the mature SU and TM proteins. The cleavage site between SU and TM requires the minimal sequence [KR]-X-[KR]-R. About 2 of the 9 disulfide bonds of gp41 are reduced by P4HB/PDI, following binding to CD4 receptor.

It is found in the virion membrane. The protein localises to the host cell membrane. The protein resides in the host endosome membrane. Functionally, oligomerizes in the host endoplasmic reticulum into predominantly trimers. In a second time, gp160 transits in the host Golgi, where glycosylation is completed. The precursor is then proteolytically cleaved in the trans-Golgi and thereby activated by cellular furin or furin-like proteases to produce gp120 and gp41. In terms of biological role, attaches the virus to the host lymphoid cell by binding to the primary receptor CD4. This interaction induces a structural rearrangement creating a high affinity binding site for a chemokine coreceptor like CXCR4 and/or CCR5. Acts as a ligand for CD209/DC-SIGN and CLEC4M/DC-SIGNR, which are respectively found on dendritic cells (DCs), and on endothelial cells of liver sinusoids and lymph node sinuses. These interactions allow capture of viral particles at mucosal surfaces by these cells and subsequent transmission to permissive cells. HIV subverts the migration properties of dendritic cells to gain access to CD4+ T-cells in lymph nodes. Virus transmission to permissive T-cells occurs either in trans (without DCs infection, through viral capture and transmission), or in cis (following DCs productive infection, through the usual CD4-gp120 interaction), thereby inducing a robust infection. In trans infection, bound virions remain infectious over days and it is proposed that they are not degraded, but protected in non-lysosomal acidic organelles within the DCs close to the cell membrane thus contributing to the viral infectious potential during DCs' migration from the periphery to the lymphoid tissues. On arrival at lymphoid tissues, intact virions recycle back to DCs' cell surface allowing virus transmission to CD4+ T-cells. Acts as a class I viral fusion protein. Under the current model, the protein has at least 3 conformational states: pre-fusion native state, pre-hairpin intermediate state, and post-fusion hairpin state. During fusion of viral and target intracellular membranes, the coiled coil regions (heptad repeats) assume a trimer-of-hairpins structure, positioning the fusion peptide in close proximity to the C-terminal region of the ectodomain. The formation of this structure appears to drive apposition and subsequent fusion of viral and target cell membranes. Complete fusion occurs in host cell endosomes and is dynamin-dependent, however some lipid transfer might occur at the plasma membrane. The virus undergoes clathrin-dependent internalization long before endosomal fusion, thus minimizing the surface exposure of conserved viral epitopes during fusion and reducing the efficacy of inhibitors targeting these epitopes. Membranes fusion leads to delivery of the nucleocapsid into the cytoplasm. This is Envelope glycoprotein gp160 from Human immunodeficiency virus type 1 group N (isolate YBF106) (HIV-1).